The chain runs to 280 residues: Transcription factor HES-1 (280 aa).

A disordered region spans residues 1–44 (MPADIMEKNSSSPVAATPASVNTTPDKPKTASEHRKSSKPIMEK). A compositionally biased stretch (low complexity) spans 10 to 21 (SSSPVAATPASV). Positions 26 to 35 (DKPKTASEHR) are enriched in basic and acidic residues. One can recognise a bHLH domain in the interval 34-91 (HRKSSKPIMEKRRRARINESLSQLKTLILDALKKDSSRHSKLEKADILEMTVKHLRNL). The Orange domain maps to 110–143 (YRAGFSECMNEVTRFLSTCEGVNTEVRTRLLGHL). Disordered stretches follow at residues 157–200 (GQPH…PPGG) and 254–280 (TSVGPNAVSPSSGPSLTADSMWRPWRN). Composition is skewed to pro residues over residues 164–174 (QAPPPPPPGPG) and 181–200 (FAPPPPLVPIPGGAAPPPGG). A compositionally biased stretch (polar residues) spans 254 to 271 (TSVGPNAVSPSSGPSLTA). The WRPW motif signature appears at 275-278 (WRPW).

In terms of assembly, transcription repression requires formation of a complex with a corepressor protein of the Groucho/TLE family. Interacts with SIRT1. Interacts (via WPRW motif) with TLE1, and more weakly with TLE2. Interacts with HES6. Interacts with an FA complex, composed of FANCA, FANCF, FANCG and FANCL, but not of FANCC, nor FANCE.

The protein localises to the nucleus. Transcriptional repressor of genes that require a bHLH protein for their transcription. May act as a negative regulator of myogenesis by inhibiting the functions of MYOD1 and ASH1. Binds DNA on N-box motifs: 5'-CACNAG-3' with high affinity and on E-box motifs: 5'-CANNTG-3' with low affinity. May play a role in a functional FA core complex response to DNA cross-link damage, being required for the stability and nuclear localization of FA core complex proteins, as well as for FANCD2 monoubiquitination in response to DNA damage. The protein is Transcription factor HES-1 (HES1) of Bos taurus (Bovine).